A 346-amino-acid polypeptide reads, in one-letter code: Protein RecA (346 aa).

67–74 (GPESSGKT) lines the ATP pocket.

It belongs to the RecA family.

It localises to the cytoplasm. Can catalyze the hydrolysis of ATP in the presence of single-stranded DNA, the ATP-dependent uptake of single-stranded DNA by duplex DNA, and the ATP-dependent hybridization of homologous single-stranded DNAs. It interacts with LexA causing its activation and leading to its autocatalytic cleavage. The polypeptide is Protein RecA (Frankia alni (strain DSM 45986 / CECT 9034 / ACN14a)).